Here is a 180-residue protein sequence, read N- to C-terminus: Putative adenylate kinase (180 aa).

ATP is bound by residues G10, G12, K13, T14, and T15. Residues S30–I50 form an NMP region. Residues A99–E109 form an LID region. ATP is bound by residues R100 and K138.

The protein belongs to the adenylate kinase family. AK6 subfamily. As to quaternary structure, interacts with uS11. Not a structural component of 40S pre-ribosomes, but transiently interacts with them by binding to uS11.

It catalyses the reaction AMP + ATP = 2 ADP. It carries out the reaction ATP + H2O = ADP + phosphate + H(+). Its function is as follows. Broad-specificity nucleoside monophosphate (NMP) kinase that catalyzes the reversible transfer of the terminal phosphate group between nucleoside triphosphates and monophosphates. Also has ATPase activity. Involved in the late maturation steps of the 30S ribosomal particles, specifically 16S rRNA maturation. While NMP activity is not required for ribosome maturation, ATPase activity is. Associates transiently with small ribosomal subunit protein uS11. ATP hydrolysis breaks the interaction with uS11. May temporarily remove uS11 from the ribosome to enable a conformational change of the ribosomal RNA that is needed for the final maturation step of the small ribosomal subunit. The sequence is that of Putative adenylate kinase from Thermococcus onnurineus (strain NA1).